The primary structure comprises 199 residues: uncharacterized protein (199 aa).

The interval 1 to 41 (MKFKRDENQNSTHHRGNKNNTNNDDDDKEEEEEIINDTTMP) is disordered. Acidic residues predominate over residues 23–35 (NDDDDKEEEEEII). 3 consecutive transmembrane segments (helical) span residues 73–93 (LILD…FAFW), 96–116 (ISTY…VSFL), and 166–186 (IAIA…SPYL).

It is found in the membrane. This is an uncharacterized protein from Dictyostelium discoideum (Social amoeba).